The chain runs to 597 residues: Scarecrow-like protein 5 (597 aa).

Residues E111–N172 are disordered. Over residues N123–S169 the composition is skewed to low complexity. The region spanning S218–R597 is the GRAS domain. The segment at G225 to S285 is leucine repeat I (LRI). Residues M304–G369 form a VHIID region. A VHIID motif is present at residues V335 to D339. Residues L385–K417 are leucine repeat II (LRII). Residues L426–N520 are PFYRE. Positions A523–R597 are SAW.

This sequence belongs to the GRAS family. In terms of tissue distribution, expressed in seedlings, roots, shoots, leaves, flowers and siliques.

The protein localises to the nucleus. Functionally, probable transcription factor involved in plant development. This Arabidopsis thaliana (Mouse-ear cress) protein is Scarecrow-like protein 5 (SCL5).